The primary structure comprises 1343 residues: DNA-directed RNA polymerase subunit beta (1343 aa).

The protein belongs to the RNA polymerase beta chain family. As to quaternary structure, the RNAP catalytic core consists of 2 alpha, 1 beta, 1 beta' and 1 omega subunit. When a sigma factor is associated with the core the holoenzyme is formed, which can initiate transcription.

The enzyme catalyses RNA(n) + a ribonucleoside 5'-triphosphate = RNA(n+1) + diphosphate. In terms of biological role, DNA-dependent RNA polymerase catalyzes the transcription of DNA into RNA using the four ribonucleoside triphosphates as substrates. The chain is DNA-directed RNA polymerase subunit beta from Haemophilus influenzae (strain 86-028NP).